We begin with the raw amino-acid sequence, 247 residues long: ATP synthase subunit a, chloroplastic (247 aa).

Helical transmembrane passes span 38–58 (QVLITSWVVIAILLISTILVV), 95–115 (VPFIGTLFLFIFVSNWSGALL), 134–154 (INTTVALALLTSVAYFYAGIS), 199–219 (LVVVVLVSLVPLVIPIPVMFL), and 220–240 (GLFTSGIQALIFATLAAAYIG).

It belongs to the ATPase A chain family. F-type ATPases have 2 components, CF(1) - the catalytic core - and CF(0) - the membrane proton channel. CF(1) has five subunits: alpha(3), beta(3), gamma(1), delta(1), epsilon(1). CF(0) has four main subunits: a, b, b' and c.

It is found in the plastid. The protein resides in the chloroplast thylakoid membrane. Functionally, key component of the proton channel; it plays a direct role in the translocation of protons across the membrane. The chain is ATP synthase subunit a, chloroplastic from Cicer arietinum (Chickpea).